Here is a 163-residue protein sequence, read N- to C-terminus: MGVRFCKDGHVIQIIIENKEEVTMKKMKEQQKKREKTKNGRRVIAAKKIQAWWRGTLVRRTLLHAALSTWIIQSWWRLTKDRLLQKKRRAALSDYALRERAVVKLQSLVRMWRIHWRYCQVLNAIYVIQCHWQCHNCQTCALLRGHCVVTATHLQFHIEIINP.

2 consecutive IQ domains span residues 42–71 (RVIA…STWI) and 98–127 (RERA…AIYV).

The polypeptide is IQ domain-containing protein F2 (IQCF2) (Bos taurus (Bovine)).